The chain runs to 542 residues: CTP synthase (542 aa).

An amidoligase domain region spans residues 1–265 (MARYVFITGG…DSEVLSAFGI (265 aa)). CTP is bound at residue Ser-13. Ser-13 contributes to the UTP binding site. 14 to 19 (SLGKGI) lines the ATP pocket. Residue Tyr-54 coordinates L-glutamine. Residue Asp-71 participates in ATP binding. Mg(2+) is bound by residues Asp-71 and Glu-139. CTP is bound by residues 146–148 (DIE), 186–191 (KTKPTQ), and Lys-222. UTP-binding positions include 186 to 191 (KTKPTQ) and Lys-222. The Glutamine amidotransferase type-1 domain maps to 291-541 (TIAVVGKYTG…IEAAIEQSRL (251 aa)). Gly-353 is an L-glutamine binding site. Cys-380 (nucleophile; for glutamine hydrolysis) is an active-site residue. L-glutamine is bound by residues 381–384 (FGMQ), Glu-404, and Arg-469. Active-site residues include His-514 and Glu-516.

It belongs to the CTP synthase family. Homotetramer.

It catalyses the reaction UTP + L-glutamine + ATP + H2O = CTP + L-glutamate + ADP + phosphate + 2 H(+). The catalysed reaction is L-glutamine + H2O = L-glutamate + NH4(+). It carries out the reaction UTP + NH4(+) + ATP = CTP + ADP + phosphate + 2 H(+). It functions in the pathway pyrimidine metabolism; CTP biosynthesis via de novo pathway; CTP from UDP: step 2/2. Its activity is regulated as follows. Allosterically activated by GTP, when glutamine is the substrate; GTP has no effect on the reaction when ammonia is the substrate. The allosteric effector GTP functions by stabilizing the protein conformation that binds the tetrahedral intermediate(s) formed during glutamine hydrolysis. Inhibited by the product CTP, via allosteric rather than competitive inhibition. In terms of biological role, catalyzes the ATP-dependent amination of UTP to CTP with either L-glutamine or ammonia as the source of nitrogen. Regulates intracellular CTP levels through interactions with the four ribonucleotide triphosphates. The protein is CTP synthase of Brucella melitensis biotype 2 (strain ATCC 23457).